We begin with the raw amino-acid sequence, 455 residues long: ATP-dependent protease ATPase subunit HslU (455 aa).

ATP contacts are provided by residues Ile-19 and 61 to 66; that span reads GVGKTE. The tract at residues 144-163 is disordered; it reads ESKVGFANEPAEDAASKKEK. Asp-268, Glu-333, and Arg-405 together coordinate ATP.

This sequence belongs to the ClpX chaperone family. HslU subfamily. As to quaternary structure, a double ring-shaped homohexamer of HslV is capped on each side by a ring-shaped HslU homohexamer. The assembly of the HslU/HslV complex is dependent on binding of ATP.

Its subcellular location is the cytoplasm. In terms of biological role, ATPase subunit of a proteasome-like degradation complex; this subunit has chaperone activity. The binding of ATP and its subsequent hydrolysis by HslU are essential for unfolding of protein substrates subsequently hydrolyzed by HslV. HslU recognizes the N-terminal part of its protein substrates and unfolds these before they are guided to HslV for hydrolysis. The polypeptide is ATP-dependent protease ATPase subunit HslU (Francisella tularensis subsp. novicida (strain U112)).